The chain runs to 216 residues: MSVKIHYQNTHFITSAPDIRHLPADEGIEIAFAGRSNAGKSSALNRLTNQKNLAKTSKTPGRTQLINLFKVTEGCHIVDLPGYGFAQVPLEMKNKWQKSLGEYLQKRECLKGLVVLMDIRHPMKDLDQQMIFWAIESRIPVQVLLTKADKLKSGARKAELLKVRKLAETFGGDVQVDVYSSLKGLGVDQLRAKLDTWFAPALAHLLEDEEGSNSAE.

One can recognise an EngB-type G domain in the interval 26–200 (EGIEIAFAGR…RAKLDTWFAP (175 aa)). GTP is bound by residues 34–41 (GRSNAGKS), 61–65 (GRTQL), 79–82 (DLPG), 146–149 (TKAD), and 179–181 (YSS). Mg(2+) contacts are provided by Ser41 and Thr63.

The protein belongs to the TRAFAC class TrmE-Era-EngA-EngB-Septin-like GTPase superfamily. EngB GTPase family. Mg(2+) serves as cofactor.

Necessary for normal cell division and for the maintenance of normal septation. This Vibrio vulnificus (strain CMCP6) protein is Probable GTP-binding protein EngB.